The following is a 221-amino-acid chain: Ribosomal RNA large subunit methyltransferase E (221 aa).

Positions 60, 62, 89, 105, and 134 each coordinate S-adenosyl-L-methionine. The active-site Proton acceptor is the Lys174. The disordered stretch occupies residues 199 to 221 (KPKASRDKSSETFLLGRQLKHPG).

It belongs to the class I-like SAM-binding methyltransferase superfamily. RNA methyltransferase RlmE family.

It localises to the cytoplasm. The catalysed reaction is uridine(2552) in 23S rRNA + S-adenosyl-L-methionine = 2'-O-methyluridine(2552) in 23S rRNA + S-adenosyl-L-homocysteine + H(+). Specifically methylates the uridine in position 2552 of 23S rRNA at the 2'-O position of the ribose in the fully assembled 50S ribosomal subunit. The polypeptide is Ribosomal RNA large subunit methyltransferase E (Ralstonia nicotianae (strain ATCC BAA-1114 / GMI1000) (Ralstonia solanacearum)).